We begin with the raw amino-acid sequence, 299 residues long: GTPase Era (299 aa).

Positions 5-172 constitute an Era-type G domain; sequence KSGFVSIIGR…IDVLKTYLPE (168 aa). Residues 13-20 form a G1 region; the sequence is GRPNVGKS. Residue 13–20 participates in GTP binding; sequence GRPNVGKS. Residues 39–43 are G2; it reads QTTRN. Residues 60–63 form a G3 region; that stretch reads DTPG. GTP-binding positions include 60 to 64 and 122 to 125; these read DTPGI and NKID. The segment at 122–125 is G4; the sequence is NKID. The tract at residues 151 to 153 is G5; sequence ISA. The KH type-2 domain occupies 203 to 280; the sequence is TSEEIPHAIG…YLELWVKVQR (78 aa).

The protein belongs to the TRAFAC class TrmE-Era-EngA-EngB-Septin-like GTPase superfamily. Era GTPase family. As to quaternary structure, monomer.

The protein resides in the cytoplasm. It is found in the cell membrane. Functionally, an essential GTPase that binds both GDP and GTP, with rapid nucleotide exchange. Plays a role in 16S rRNA processing and 30S ribosomal subunit biogenesis and possibly also in cell cycle regulation and energy metabolism. This chain is GTPase Era, found in Staphylococcus aureus (strain Mu3 / ATCC 700698).